We begin with the raw amino-acid sequence, 108 residues long: Tyrosine-protein phosphatase 5 (108 aa).

The 108-residue stretch at 1–108 folds into the Tyrosine-protein phosphatase domain; that stretch reads QESTVIVMLT…QGNNPSPIIV (108 aa). D78 contacts substrate.

Belongs to the protein-tyrosine phosphatase family.

The catalysed reaction is O-phospho-L-tyrosyl-[protein] + H2O = L-tyrosyl-[protein] + phosphate. This chain is Tyrosine-protein phosphatase 5 (STY-5), found in Styela plicata (Wrinkled sea squirt).